The chain runs to 511 residues: Membrane-bound lytic murein transglycosylase F (511 aa).

An N-terminal signal peptide occupies residues 1–19; it reads MKKLKINYLLIGIVTLLLA. The non-LT domain stretch occupies residues 20-269; sequence AALWPSIPWS…RLEEKYLGHG (250 aa). Positions 270–511 are LT domain; sequence NDFDYVDTRT…ARMKLPGHLY (242 aa). Glutamate 314 is an active-site residue.

It in the N-terminal section; belongs to the bacterial solute-binding protein 3 family. This sequence in the C-terminal section; belongs to the transglycosylase Slt family.

It is found in the cell outer membrane. The enzyme catalyses Exolytic cleavage of the (1-&gt;4)-beta-glycosidic linkage between N-acetylmuramic acid (MurNAc) and N-acetylglucosamine (GlcNAc) residues in peptidoglycan, from either the reducing or the non-reducing ends of the peptidoglycan chains, with concomitant formation of a 1,6-anhydrobond in the MurNAc residue.. In terms of biological role, murein-degrading enzyme that degrades murein glycan strands and insoluble, high-molecular weight murein sacculi, with the concomitant formation of a 1,6-anhydromuramoyl product. Lytic transglycosylases (LTs) play an integral role in the metabolism of the peptidoglycan (PG) sacculus. Their lytic action creates space within the PG sacculus to allow for its expansion as well as for the insertion of various structures such as secretion systems and flagella. The protein is Membrane-bound lytic murein transglycosylase F of Klebsiella pneumoniae subsp. pneumoniae (strain ATCC 700721 / MGH 78578).